Consider the following 318-residue polypeptide: S-adenosylmethionine/S-adenosylhomocysteine transporter (318 aa).

Helical transmembrane passes span 7–27, 44–64, 76–96, 105–125, 134–154, 163–183, 193–213, 231–251, 262–282, and 285–305; these read FANLYVEPMAIFLIFLNAFIW, LFVTGSRMVLAGIVLFGLLLF, VMPIVLLSVIGFYLTNVLEFI, KACFIYGFSPFTAAFCSYVQL, LGGLSLGLVSYLVYLLFGGGE, LGMPELLLIVATCLSSYGWTL, SLSITAINAYAMVIAGILSLA, LFLQSIGALVIFSNLICYNLF, FLSFCNLVMPLFASFFGWLLL, and SFPPGLLFAVGFMVLGCRLIY. One can recognise an EamA 1 domain in the interval 25–148; sequence FIWSSSFALS…LGLVSYLVYL (124 aa). Positions 191-304 constitute an EamA 2 domain; sequence CESLSITAIN…GFMVLGCRLI (114 aa).

Belongs to the drug/metabolite transporter (DMT) superfamily. 10 TMS drug/metabolite exporter (DME) (TC 2.A.7.3) family.

Its subcellular location is the cell membrane. Functionally, transports S-adenosylmethionine (SAM) and S-adenosylhomocysteine (SAH). Allows bacteria to acquire SAM from the eukaryotic host cell and to likely remove the toxic by-product SAH. The chain is S-adenosylmethionine/S-adenosylhomocysteine transporter from Chlamydia muridarum (strain MoPn / Nigg).